Reading from the N-terminus, the 366-residue chain is 3-dehydroquinate synthase (366 aa).

NAD(+) is bound by residues 74–79, 108–112, 132–133, Lys144, Lys153, and 171–174; these read SGEAAK, GVVGD, TT, and FLRT. 3 residues coordinate Zn(2+): Glu186, His249, and His266.

The protein belongs to the sugar phosphate cyclases superfamily. Dehydroquinate synthase family. Co(2+) is required as a cofactor. Requires Zn(2+) as cofactor. It depends on NAD(+) as a cofactor.

It localises to the cytoplasm. It carries out the reaction 7-phospho-2-dehydro-3-deoxy-D-arabino-heptonate = 3-dehydroquinate + phosphate. It functions in the pathway metabolic intermediate biosynthesis; chorismate biosynthesis; chorismate from D-erythrose 4-phosphate and phosphoenolpyruvate: step 2/7. Catalyzes the conversion of 3-deoxy-D-arabino-heptulosonate 7-phosphate (DAHP) to dehydroquinate (DHQ). The sequence is that of 3-dehydroquinate synthase from Geobacillus kaustophilus (strain HTA426).